The primary structure comprises 1773 residues: Plexin-2 (1773 aa).

The N-terminal stretch at 1-19 (MLFIESAFLVLTSLSAAEA) is a signal peptide. The Sema domain maps to 20–436 (ATPFEGGVKQ…MPYGIVMEEL (417 aa)). At 20 to 1130 (ATPFEGGVKQ…SDHALPSRLS (1111 aa)) the chain is on the extracellular side. N-linked (GlcNAc...) asparagine glycosylation is present at N65. Disulfide bonds link C83–C90, C117–C125, C239–C341, C255–C292, C310–C328, C439–C456, C445–C479, C448–C465, and C459–C471. The N-linked (GlcNAc...) asparagine glycan is linked to N241. The 43-residue stretch at 438-480 (TCAHHESCTDCQVSVDPLCQWCHPTQSCTTSSRCSGPLTTQCP) folds into the PSI 1 domain. N494 is a glycosylation site (N-linked (GlcNAc...) asparagine). A disulfide bond links C516 and C538. A glycan (N-linked (GlcNAc...) asparagine) is linked at N566. The 38-residue stretch at 571-608 (DCAGYSTCSTCMSSEFGCQWCSHKCSSSCGSASAKACV) folds into the PSI 2 domain. N670 and N693 each carry an N-linked (GlcNAc...) asparagine glycan. A PSI 3 domain is found at 698–739 (SCSNLAADCSSCLALSPSLSCGWCNRKCSHECHESKATAVCD). IPT/TIG domains follow at residues 741–829 (PKID…FSFV), 831–916 (VSIF…FEYR), and 919–1006 (PSVN…FLMD). Residues N855, N877, N975, and N1007 are each glycosylated (N-linked (GlcNAc...) asparagine). Residues 1131–1151 (FLILGLLLFTVITLIVMCLIF) traverse the membrane as a helical segment. Residues 1150 to 1188 (IFKRRRQEREKEYRKIQLQMENLENNVRKECKQAFAELQ) adopt a coiled-coil conformation. Residues 1152 to 1764 (KRRRQEREKE…LHVCLETDNH (613 aa)) are Cytoplasmic-facing.

This sequence belongs to the plexin family. Interacts with mab-20.

The protein resides in the cell membrane. Involved as a receptor for mab-20/sema-2a in the formation or stabilization of cell-cell contacts at several stages of epithelial morphogenesis. In early embryonic development, required for proper ventral closure of the epidermis. During male tail morphogenesis, involved in precursor cell sorting and in the formation of distinct sensory rays. Involved in axon guidance of SDQL neurons during neurogenesis. In Caenorhabditis briggsae, this protein is Plexin-2 (plx-2).